Reading from the N-terminus, the 220-residue chain is N-(5'-phosphoribosyl)anthranilate isomerase (220 aa).

This sequence belongs to the TrpF family.

The catalysed reaction is N-(5-phospho-beta-D-ribosyl)anthranilate = 1-(2-carboxyphenylamino)-1-deoxy-D-ribulose 5-phosphate. Its pathway is amino-acid biosynthesis; L-tryptophan biosynthesis; L-tryptophan from chorismate: step 3/5. This chain is N-(5'-phosphoribosyl)anthranilate isomerase, found in Bordetella petrii (strain ATCC BAA-461 / DSM 12804 / CCUG 43448).